The sequence spans 351 residues: Holliday junction branch migration complex subunit RuvB (351 aa).

The large ATPase domain (RuvB-L) stretch occupies residues 4-199 (DNPQFNQWYE…FGIINSLQYY (196 aa)). Residues Leu38, Arg39, Gly80, Lys83, Thr84, Thr85, 146 to 148 (EDY), Arg189, Tyr199, and Arg236 each bind ATP. Thr84 contributes to the Mg(2+) binding site. The tract at residues 200–270 (TPEELQQIVV…IVTIGLDKLR (71 aa)) is small ATPAse domain (RuvB-S). Residues 273-351 (NRGLDETDHK…HLGHAYQRKL (79 aa)) are head domain (RuvB-H). Residues Arg328 and Arg333 each coordinate DNA.

Belongs to the RuvB family. In terms of assembly, homohexamer. Forms an RuvA(8)-RuvB(12)-Holliday junction (HJ) complex. HJ DNA is sandwiched between 2 RuvA tetramers; dsDNA enters through RuvA and exits via RuvB. An RuvB hexamer assembles on each DNA strand where it exits the tetramer. Each RuvB hexamer is contacted by two RuvA subunits (via domain III) on 2 adjacent RuvB subunits; this complex drives branch migration. In the full resolvosome a probable DNA-RuvA(4)-RuvB(12)-RuvC(2) complex forms which resolves the HJ.

The protein localises to the cytoplasm. The catalysed reaction is ATP + H2O = ADP + phosphate + H(+). Its function is as follows. The RuvA-RuvB-RuvC complex processes Holliday junction (HJ) DNA during genetic recombination and DNA repair, while the RuvA-RuvB complex plays an important role in the rescue of blocked DNA replication forks via replication fork reversal (RFR). RuvA specifically binds to HJ cruciform DNA, conferring on it an open structure. The RuvB hexamer acts as an ATP-dependent pump, pulling dsDNA into and through the RuvAB complex. RuvB forms 2 homohexamers on either side of HJ DNA bound by 1 or 2 RuvA tetramers; 4 subunits per hexamer contact DNA at a time. Coordinated motions by a converter formed by DNA-disengaged RuvB subunits stimulates ATP hydrolysis and nucleotide exchange. Immobilization of the converter enables RuvB to convert the ATP-contained energy into a lever motion, pulling 2 nucleotides of DNA out of the RuvA tetramer per ATP hydrolyzed, thus driving DNA branch migration. The RuvB motors rotate together with the DNA substrate, which together with the progressing nucleotide cycle form the mechanistic basis for DNA recombination by continuous HJ branch migration. Branch migration allows RuvC to scan DNA until it finds its consensus sequence, where it cleaves and resolves cruciform DNA. The polypeptide is Holliday junction branch migration complex subunit RuvB (Leuconostoc mesenteroides subsp. mesenteroides (strain ATCC 8293 / DSM 20343 / BCRC 11652 / CCM 1803 / JCM 6124 / NCDO 523 / NBRC 100496 / NCIMB 8023 / NCTC 12954 / NRRL B-1118 / 37Y)).